The primary structure comprises 313 residues: Ornithine carbamoyltransferase (313 aa).

Carbamoyl phosphate contacts are provided by residues 57–60, arginine 108, and 135–138; these read STRT and HPTQ. Residues asparagine 167, aspartate 231, and 235 to 236 each bind L-ornithine; that span reads SM. Residues 272 to 273 and arginine 300 each bind carbamoyl phosphate; that span reads CL.

It belongs to the aspartate/ornithine carbamoyltransferase superfamily. OTCase family.

It localises to the cytoplasm. The catalysed reaction is carbamoyl phosphate + L-ornithine = L-citrulline + phosphate + H(+). It participates in amino-acid biosynthesis; L-arginine biosynthesis; L-arginine from L-ornithine and carbamoyl phosphate: step 1/3. Its function is as follows. Reversibly catalyzes the transfer of the carbamoyl group from carbamoyl phosphate (CP) to the N(epsilon) atom of ornithine (ORN) to produce L-citrulline. In Thermotoga petrophila (strain ATCC BAA-488 / DSM 13995 / JCM 10881 / RKU-1), this protein is Ornithine carbamoyltransferase.